Consider the following 137-residue polypeptide: Small ribosomal subunit protein uS12 (137 aa).

Disordered regions lie at residues Met1–Pro22 and Lys37–Lys57. Over residues Arg9–Ser19 the composition is skewed to basic residues. Position 102 is a 3-methylthioaspartic acid (Asp102).

This sequence belongs to the universal ribosomal protein uS12 family. In terms of assembly, part of the 30S ribosomal subunit. Contacts proteins S8 and S17. May interact with IF1 in the 30S initiation complex.

Functionally, with S4 and S5 plays an important role in translational accuracy. Its function is as follows. Interacts with and stabilizes bases of the 16S rRNA that are involved in tRNA selection in the A site and with the mRNA backbone. Located at the interface of the 30S and 50S subunits, it traverses the body of the 30S subunit contacting proteins on the other side and probably holding the rRNA structure together. The combined cluster of proteins S8, S12 and S17 appears to hold together the shoulder and platform of the 30S subunit. This chain is Small ribosomal subunit protein uS12, found in Limosilactobacillus fermentum (strain NBRC 3956 / LMG 18251) (Lactobacillus fermentum).